Consider the following 222-residue polypeptide: Cytidylate kinase (222 aa).

Gly7–Ser15 is an ATP binding site.

This sequence belongs to the cytidylate kinase family. Type 1 subfamily.

The protein localises to the cytoplasm. The catalysed reaction is CMP + ATP = CDP + ADP. The enzyme catalyses dCMP + ATP = dCDP + ADP. The polypeptide is Cytidylate kinase (Borrelia turicatae (strain 91E135)).